A 276-amino-acid chain; its full sequence is Diaminopimelate epimerase (276 aa).

Residues asparagine 13, glutamine 46, and asparagine 66 each contribute to the substrate site. The active-site Proton donor is cysteine 75. Residues 76–77 (GN), asparagine 159, asparagine 192, and 210–211 (ER) each bind substrate. The Proton acceptor role is filled by cysteine 219. 220–221 (GT) serves as a coordination point for substrate.

This sequence belongs to the diaminopimelate epimerase family. As to quaternary structure, homodimer.

Its subcellular location is the cytoplasm. The enzyme catalyses (2S,6S)-2,6-diaminopimelate = meso-2,6-diaminopimelate. It participates in amino-acid biosynthesis; L-lysine biosynthesis via DAP pathway; DL-2,6-diaminopimelate from LL-2,6-diaminopimelate: step 1/1. Functionally, catalyzes the stereoinversion of LL-2,6-diaminopimelate (L,L-DAP) to meso-diaminopimelate (meso-DAP), a precursor of L-lysine and an essential component of the bacterial peptidoglycan. In Pseudomonas fluorescens, this protein is Diaminopimelate epimerase.